The primary structure comprises 217 residues: Peptide methionine sulfoxide reductase MsrA (217 aa).

Residue Cys56 is part of the active site.

The protein belongs to the MsrA Met sulfoxide reductase family.

The enzyme catalyses L-methionyl-[protein] + [thioredoxin]-disulfide + H2O = L-methionyl-(S)-S-oxide-[protein] + [thioredoxin]-dithiol. It carries out the reaction [thioredoxin]-disulfide + L-methionine + H2O = L-methionine (S)-S-oxide + [thioredoxin]-dithiol. Its function is as follows. Has an important function as a repair enzyme for proteins that have been inactivated by oxidation. Catalyzes the reversible oxidation-reduction of methionine sulfoxide in proteins to methionine. The sequence is that of Peptide methionine sulfoxide reductase MsrA from Corynebacterium glutamicum (strain R).